The following is a 2341-amino-acid chain: Pecanex-like protein 1 (2341 aa).

2 helical membrane-spanning segments follow: residues 28–50 and 57–74; these read ATFV…FTLY and MIIV…FIVL. The interval 98–163 is disordered; the sequence is FTDQRTKAEQ…SNQIGSGSSR (66 aa). N-linked (GlcNAc...) asparagine glycosylation occurs at Asn-109. Positions 143 to 163 are enriched in polar residues; the sequence is SSRNSYAGLDPSNQIGSGSSR. A glycan (N-linked (GlcNAc...) asparagine) is linked at Asn-215. 3 disordered regions span residues 270–294, 311–331, and 344–689; these read HSHS…VAFP, DPVS…SLVE, and DLKI…TRAR. A compositionally biased stretch (basic residues) spans 272–282; that stretch reads HSYRKDHRPRG. 2 stretches are compositionally biased toward polar residues: residues 320 to 331 and 347 to 356; these read KPLSGSKESLVE and INTSQPPTKS. N-linked (GlcNAc...) asparagine glycosylation is present at Asn-348. The span at 370-388 shows a compositional bias: low complexity; the sequence is SLRSLSTRSSGSTESYCSG. A glycan (N-linked (GlcNAc...) asparagine) is linked at Asn-394. Over residues 394 to 404 the composition is skewed to polar residues; the sequence is NSTVSSYKSEQ. 3 stretches are compositionally biased toward basic and acidic residues: residues 430–455, 465–478, and 527–544; these read KKEC…EKIA, HEAK…EMHN, and SKVR…DVRP. Residues 554–569 are compositionally biased toward basic residues; sequence ASAHKSGRRRTGKKRA. Positions 605 to 635 are enriched in low complexity; the sequence is QSDLSRASSVQSAHQFSSDSSSSTTSHSCQS. Asn-702 carries an N-linked (GlcNAc...) asparagine glycan. The interval 756–834 is disordered; the sequence is QVAFPEGEEQ…STAQVKVQSR (79 aa). Residues 814–832 show a composition bias toward low complexity; that stretch reads LSLQDGQQGQQSTAQVKVQ. 2 N-linked (GlcNAc...) asparagine glycosylation sites follow: Asn-852 and Asn-863. 3 helical membrane-spanning segments follow: residues 1003–1025, 1032–1049, and 1067–1089; these read ILEN…ILLI, IWVF…YSLL, and IAYS…DYGS. A glycan (N-linked (GlcNAc...) asparagine) is linked at Asn-1091. The helical transmembrane segment at 1110-1132 threads the bilayer; it reads FISARDLVIVFTLCFPIVFFIGL. N-linked (GlcNAc...) asparagine glycosylation occurs at Asn-1155. A run of 4 helical transmembrane segments spans residues 1160–1182, 1194–1213, 1266–1288, and 1295–1312; these read LLAA…GLCY, IPVL…YHLS, LVVC…FTVL, and VLYT…YVLP. N-linked (GlcNAc...) asparagine glycans are attached at residues Asn-1579, Asn-1720, Asn-1982, Asn-2062, and Asn-2072. Disordered stretches follow at residues 2062–2120 and 2217–2237; these read NATT…SPAR and GQSS…NNSH. Polar residues-rich tracts occupy residues 2069–2078, 2096–2114, and 2217–2236; these read PHSNVTQGSI, YPPT…SGLV, and GQSS…ANNS. N-linked (GlcNAc...) asparagine glycosylation is found at Asn-2234 and Asn-2260.

Belongs to the pecanex family.

It is found in the membrane. This chain is Pecanex-like protein 1, found in Homo sapiens (Human).